The primary structure comprises 223 residues: Probable chemoreceptor glutamine deamidase CheD (223 aa).

Residues Gln-189–Ser-223 form a disordered region.

Belongs to the CheD family.

The enzyme catalyses L-glutaminyl-[protein] + H2O = L-glutamyl-[protein] + NH4(+). Its function is as follows. Probably deamidates glutamine residues to glutamate on methyl-accepting chemotaxis receptors (MCPs), playing an important role in chemotaxis. The protein is Probable chemoreceptor glutamine deamidase CheD of Bordetella petrii (strain ATCC BAA-461 / DSM 12804 / CCUG 43448).